Consider the following 701-residue polypeptide: Reverse gyrase subunit A (701 aa).

In terms of domain architecture, Toprim spans 41-197 (MVLFIVESPN…NIYRAEFHEV (157 aa)). Glu-47 serves as a coordination point for Mg(2+). The segment at 117–143 (IKKCLDCGHQFVDEDKCPRCGSENIDD) adopts an RG C-terminal-type zinc-finger fold. Positions 120, 123, 133, and 136 each coordinate Zn(2+). Asp-166 is a Mg(2+) binding site. Positions 213 to 602 (NTNRVKAQLV…SFKKELIEIW (390 aa)) constitute a Topo IA-type catalytic domain. Residue Tyr-352 is the O-(5'-phospho-DNA)-tyrosine intermediate of the active site.

Belongs to the type IA topoisomerase family. In terms of assembly, heterodimer of an RgyA and RgyB subunit. It depends on Zn(2+) as a cofactor. Mg(2+) is required as a cofactor.

It localises to the cytoplasm. Its function is as follows. Modifies the topological state of DNA by introducing positive supercoils in an ATP-dependent process. Binds to single-stranded DNA, transiently cleaves and then rejoins the end, introducing a positive supercoil in the process. The scissile phosphodiester is attacked by the catalytic tyrosine of the enzyme, resulting in the formation of a DNA-(5'-phosphotyrosyl)-enzyme intermediate. Probably involved in rewinding DNA strands in regions of the chromosome that have opened up to allow replication, transcription, DNA repair or for DNA protection. Reconstituted holoenzyme binds dsDNA a bit better than ssDNA, this subunit preferentially binds ssDNA. In isolation this subunit relaxes negatively-supercoiled DNA, and stimulates the endogenous ATPase activity of the RgyB subunit. This chain is Reverse gyrase subunit A, found in Nanoarchaeum equitans (strain Kin4-M).